A 435-amino-acid chain; its full sequence is Putrescine transporter PotE (435 aa).

12 consecutive transmembrane segments (helical) span residues 8–28 (IGVVQLTILTMVNMMGSGIIM), 39–59 (ISIVSWLVTAVGSTALAYAFA), 95–115 (LVIANTAIAISAVGYGSELFG), 117–137 (ILSPLSIALWTIFTLWLATVL), 148–168 (ISSFTIWGVIIPVVGISIIGW), 185–205 (VPTFEAIGVSISMTLWAFLGL), 224–244 (IAVLGGTLGAAVIYIVSTNVI), 275–295 (VIMGLMVMSCFGSLLGWQFTI), 320–340 (APVVGMITITALQTLLSLMTI), 354–374 (LAVVTNVIPYLLSMAALAVLL), 386–406 (TTVFVAFIGSLYSIYALYAAG), and 409–429 (AMLYGSIVTFIGWTLYGFVSY).

This sequence belongs to the amino acid-polyamine-organocation (APC) superfamily. Basic amino acid/polyamine antiporter (APA) (TC 2.A.3.2) family.

Its subcellular location is the cell inner membrane. It carries out the reaction putrescine(in) + H(+)(in) = putrescine(out) + H(+)(out). The enzyme catalyses putrescine(in) + L-ornithine(out) = putrescine(out) + L-ornithine(in). Catalyzes both the uptake and excretion of putrescine. The uptake of putrescine is dependent on the membrane potential and the excretion involves putrescine-ornithine antiporter activity. The chain is Putrescine transporter PotE from Haemophilus influenzae (strain ATCC 51907 / DSM 11121 / KW20 / Rd).